Here is a 384-residue protein sequence, read N- to C-terminus: Odorant receptor 46a, isoform B (384 aa).

The Cytoplasmic segment spans residues 1 to 37; sequence MVTEDFYKYQVWYFQILGVWQLPTWAADHQRRFQSMR. Residues 38 to 58 traverse the membrane as a helical segment; the sequence is FGFILVILFIMLLLFSFEMLN. A glycan (N-linked (GlcNAc...) asparagine) is linked at asparagine 59. The Extracellular portion of the chain corresponds to 59-65; sequence NISQVRE. A helical membrane pass occupies residues 66–86; it reads ILKVFFMFATEISCMAKLLHL. Residues 87–130 are Cytoplasmic-facing; sequence KLKSRKLAGLVDAMLSPEFGVKSEQEMQMLELDRVAVVRMRNSY. The helical transmembrane segment at 131 to 151 threads the bilayer; it reads GIMSLGAASLILIVPCFDNFG. The Extracellular portion of the chain corresponds to 152-165; sequence ELPLAMLEVCSIEG. A helical membrane pass occupies residues 166-186; the sequence is WICYWSQYLFHSICLLPTCVL. The Cytoplasmic segment spans residues 187–247; the sequence is NITYDSVAYS…YNRIVRFKDL (61 aa). Residues 248 to 268 traverse the membrane as a helical segment; it reads VELFIKGPGSVQLMCSVLVLV. Over 269–283 the chain is Extracellular; sequence SNLYDMSTMSIANGD. The chain crosses the membrane as a helical span at residues 284 to 304; sequence AIFMLKTCIYQLVMLWQIFII. The Cytoplasmic segment spans residues 305-348; it reads CYASNEVTVQSSRLCHSIYSSQWTGWNRANRRIVLLMMQRFNSP. A helical transmembrane segment spans residues 349-369; sequence MLLSTFNPTFAFSLEAFGSIV. The N-linked (GlcNAc...) asparagine glycan is linked to asparagine 370. Over 370-384 the chain is Extracellular; that stretch reads NCSYSYFALLKRVNS.

This sequence belongs to the insect chemoreceptor superfamily. Heteromeric odorant receptor channel (TC 1.A.69) family. Or2a subfamily. Interacts with Orco. Complexes exist early in the endomembrane system in olfactory sensory neurons (OSNs), coupling these complexes to the conserved ciliary trafficking pathway. In terms of tissue distribution, isoform B is expressed in the antenna.

The protein resides in the cell membrane. Odorant receptor which mediates acceptance or avoidance behavior, depending on its substrates. The odorant receptor repertoire encodes a large collection of odor stimuli that vary widely in identity, intensity, and duration. May form a complex with Orco to form odorant-sensing units, providing sensitive and prolonged odorant signaling and calcium permeability. This chain is Odorant receptor 46a, isoform B (Or46a), found in Drosophila melanogaster (Fruit fly).